We begin with the raw amino-acid sequence, 267 residues long: MMGINERKGFDFEYYQRNLLLQEKGFPTPKATSTGTTIVGVIAKDCIVLGADTRATAGPIIADKNCKKLHLISPNIWCAGAGTAADTEFVTSMISSNIELHSLYTNRKPRVVTALTMLKQHLFRYQGHIGAYLVLGGYDCKGPHLFTIAAHGSSDKLPYVALGSGSLAAISVLETKYQPDLERHEAMELVKEAIEAGIFNDLGSGSNCDLVVIDEEKATPYRGYSKPNERATKQSKYTYDRGTTAVLKEDIYKFVTVQDLDEMQVDV.

A propeptide spans M1–G35 (removed in mature form). Residue T36 is the Nucleophile of the active site.

Belongs to the peptidase T1B family. The 26S proteasome consists of a 20S proteasome core and two 19S regulatory subunits. The 20S proteasome core is composed of 28 subunits that are arranged in four stacked rings, resulting in a barrel-shaped structure. The two end rings are each formed by seven alpha subunits, and the two central rings are each formed by seven beta subunits. The catalytic chamber with the active sites is on the inside of the barrel.

The protein localises to the cytoplasm. It is found in the nucleus. It carries out the reaction Cleavage of peptide bonds with very broad specificity.. Functionally, the proteasome is a multicatalytic proteinase complex which is characterized by its ability to cleave peptides with Arg, Phe, Tyr, Leu, and Glu adjacent to the leaving group at neutral or slightly basic pH. The proteasome has an ATP-dependent proteolytic activity (Potential). The polypeptide is Probable proteasome subunit beta type-2 (pup1) (Schizosaccharomyces pombe (strain 972 / ATCC 24843) (Fission yeast)).